Consider the following 418-residue polypeptide: Beta-2 adrenergic receptor (418 aa).

The Extracellular segment spans residues 1–34 (MGQPGNRSVFLLAPNGSHAPDQDVPQERDEAWVV). N-linked (GlcNAc...) asparagine glycosylation is found at asparagine 6 and asparagine 15. A helical transmembrane segment spans residues 35 to 58 (GMAIVMSLIVLAIVFGNVLVITAI). Over 59–71 (AKFERLQTVTNYF) the chain is Cytoplasmic. The chain crosses the membrane as a helical span at residues 72–95 (ITSLACADLVMGLAVVPFGASHIL). At 96–106 (MKMWTFGSFWC) the chain is on the extracellular side. 2 disulfides stabilise this stretch: cysteine 106/cysteine 191 and cysteine 184/cysteine 190. Residues 107–129 (EFWISIDVLCVTASIETLCVIAV) traverse the membrane as a helical segment. Residues 130–150 (DRYLAITSPFKYQCLLTKNKA) lie on the Cytoplasmic side of the membrane. Tyrosine 141 bears the Phosphotyrosine mark. The chain crosses the membrane as a helical span at residues 151–174 (RVVILMVWVVSGLISFLPIKMHWY). Over 175-196 (QATHREALNCYAEEACCDFFTN) the chain is Extracellular. Residues 197–220 (QPYAIASSIVSFYLPLVVMVFVYS) traverse the membrane as a helical segment. The Cytoplasmic portion of the chain corresponds to 221–274 (RVFQVARRQLQKIDKSEGRFHAQNLSQAEQDGRSGPGHRRSSKFCLKEHKALKT). The residue at position 246 (serine 246) is a Phosphoserine. A phosphoserine; by PKA mark is found at serine 261 and serine 262. The S-palmitoyl cysteine moiety is linked to residue cysteine 265. The chain crosses the membrane as a helical span at residues 275–298 (LGIIMGTFTLCWLPFFIVNIVHGI). At 299–305 (HDNLIPK) the chain is on the extracellular side. A helical transmembrane segment spans residues 306 to 329 (EVYILLNWVGYVNSAFNPLIYCRS). The Cytoplasmic portion of the chain corresponds to 330–418 (PDFRMAFQEL…RNCSTNDSML (89 aa)). Cysteine 341 carries S-palmitoyl cysteine lipidation. Residues serine 345 and serine 346 each carry the phosphoserine; by PKA modification. 2 positions are modified to phosphoserine; by BARK: serine 355 and serine 356. The segment at 381–418 (RLCEDAPGPEGCAHRQGTVPDDSTDSQGRNCSTNDSML) is disordered. Residues proline 387 and proline 400 each carry the 4-hydroxyproline modification. A compositionally biased stretch (polar residues) spans 405-418 (DSQGRNCSTNDSML). The PDZ-binding motif lies at 415-418 (DSML).

The protein belongs to the G-protein coupled receptor 1 family. Adrenergic receptor subfamily. ADRB2 sub-subfamily. Binds NHERF1 and GPRASP1. Interacts with ARRB1 and ARRB2. Interacts with SRC. Interacts with USP20 and USP33. Interacts with VHL; the interaction, which is increased on hydroxylation of ADRB2, ubiquitinates ADRB2 leading to its degradation. Interacts with EGLN3; the interaction hydroxylates ADRB2 facilitating VHL-E3 ligase-mediated ubiquitination. Interacts (via PDZ-binding motif) with SNX27 (via PDZ domain); the interaction is required when endocytosed to prevent degradation in lysosomes and promote recycling to the plasma membrane. Interacts with CNIH4. Interacts with ARRDC3. Interacts with NEDD4. Interacts with MARCHF2. Post-translationally, palmitoylated; may reduce accessibility of Ser-345 and Ser-346 by anchoring Cys-341 to the plasma membrane. Agonist stimulation promotes depalmitoylation and further allows Ser-345 and Ser-346 phosphorylation. In terms of processing, phosphorylated by PKA and BARK upon agonist stimulation, which mediates homologous desensitization of the receptor. PKA-mediated phosphorylation seems to facilitate phosphorylation by BARK. Phosphorylation of Tyr-141 is induced by insulin and leads to supersensitization of the receptor. Post-translationally, polyubiquitinated. Agonist-induced ubiquitination leads to sort internalized receptors to the lysosomes for degradation. Deubiquitination by USP20 and USP33, leads to ADRB2 recycling and resensitization after prolonged agonist stimulation. USP20 and USP33 are constitutively associated and are dissociated immediately after agonist stimulation. Ubiquitination by the VHL-E3 ligase complex is oxygen-dependent. In terms of processing, hydroxylation by EGLN3 occurs only under normoxia and increases the interaction with VHL and the subsequent ubiquitination and degradation of ADRB2. Palmitoylated. Mainly palmitoylated at Cys-341. Palmitoylation may reduce accessibility of phosphorylation sites by anchoring the receptor to the plasma membrane. Agonist stimulation promotes depalmitoylation and further allows Ser-345 and Ser-346 phosphorylation. Also undergoes transient, ligand-induced palmitoylation at Cys-265 probably by ZDHHC9, ZDHHC14 and ZDHHC18 within the Golgi. Palmitoylation at Cys-265 requires phosphorylation by PKA and receptor internalization and stabilizes the receptor. Could be depalmitoylated by LYPLA1 at the plasma membrane. As to expression, expressed in heart, liver, lung, skeletal muscle and subcutaneous adipose tissue.

Its subcellular location is the cell membrane. It localises to the early endosome. It is found in the golgi apparatus. Its function is as follows. Beta-adrenergic receptors mediate the catecholamine-induced activation of adenylate cyclase through the action of G proteins. The beta-2-adrenergic receptor binds epinephrine with an approximately 30-fold greater affinity than it does norepinephrine. This Sus scrofa (Pig) protein is Beta-2 adrenergic receptor (ADRB2).